A 447-amino-acid polypeptide reads, in one-letter code: Tubulin beta chain (447 aa).

The GTP site is built by Q11, E69, S138, G142, T143, G144, N204, and N226. E69 contacts Mg(2+). Residues 421–447 (EYQQYQDASISEGEEEYEEEAPMEPEE) form a disordered region. Residues 432 to 447 (EGEEEYEEEAPMEPEE) are compositionally biased toward acidic residues.

It belongs to the tubulin family. As to quaternary structure, dimer of alpha and beta chains. A typical microtubule is a hollow water-filled tube with an outer diameter of 25 nm and an inner diameter of 15 nM. Alpha-beta heterodimers associate head-to-tail to form protofilaments running lengthwise along the microtubule wall with the beta-tubulin subunit facing the microtubule plus end conferring a structural polarity. Microtubules usually have 13 protofilaments but different protofilament numbers can be found in some organisms and specialized cells. Mg(2+) is required as a cofactor.

The protein resides in the cytoplasm. Its subcellular location is the cytoskeleton. In terms of biological role, tubulin is the major constituent of microtubules, a cylinder consisting of laterally associated linear protofilaments composed of alpha- and beta-tubulin heterodimers. Microtubules grow by the addition of GTP-tubulin dimers to the microtubule end, where a stabilizing cap forms. Below the cap, tubulin dimers are in GDP-bound state, owing to GTPase activity of alpha-tubulin. The chain is Tubulin beta chain from Rhynchosporium secalis (Barley scald fungus).